We begin with the raw amino-acid sequence, 306 residues long: Methionyl-tRNA formyltransferase (306 aa).

Residue 110–113 (SLLP) coordinates (6S)-5,6,7,8-tetrahydrofolate.

It belongs to the Fmt family.

The enzyme catalyses L-methionyl-tRNA(fMet) + (6R)-10-formyltetrahydrofolate = N-formyl-L-methionyl-tRNA(fMet) + (6S)-5,6,7,8-tetrahydrofolate + H(+). Attaches a formyl group to the free amino group of methionyl-tRNA(fMet). The formyl group appears to play a dual role in the initiator identity of N-formylmethionyl-tRNA by promoting its recognition by IF2 and preventing the misappropriation of this tRNA by the elongation apparatus. The polypeptide is Methionyl-tRNA formyltransferase (Brucella suis biovar 1 (strain 1330)).